A 194-amino-acid polypeptide reads, in one-letter code: Fe/S biogenesis protein NfuA (194 aa).

[4Fe-4S] cluster is bound by residues C151 and C154.

It belongs to the NfuA family. As to quaternary structure, homodimer. [4Fe-4S] cluster is required as a cofactor.

Its function is as follows. Involved in iron-sulfur cluster biogenesis. Binds a 4Fe-4S cluster, can transfer this cluster to apoproteins, and thereby intervenes in the maturation of Fe/S proteins. Could also act as a scaffold/chaperone for damaged Fe/S proteins. This is Fe/S biogenesis protein NfuA from Aliivibrio fischeri (strain ATCC 700601 / ES114) (Vibrio fischeri).